A 523-amino-acid chain; its full sequence is Frizzled-4 (523 aa).

Residues 1-22 (MGARSLTLLYLLCCLVVGLIAG) form the signal peptide. At 23 to 198 (FGEEEERSCD…KCGYDSGLYN (176 aa)) the chain is on the extracellular side. Residues 26–147 (EEERSCDPIR…NDHNHMCMEG (122 aa)) form the FZ domain. 8 disulfides stabilise this stretch: C31-C92, C39-C85, C76-C114, C103-C144, C107-C131, C167-C186, C190-C268, and C288-C363. N45 carries an N-linked (GlcNAc...) asparagine glycan. The N-linked (GlcNAc...) asparagine glycan is linked to N130. Residues 199 to 229 (RLSKEFTDIWMAVWASLCFISTAFTVLTFLI) traverse the membrane as a helical segment. Residues 230 to 235 (DSSRFC) are Cytoplasmic-facing. Residues 236 to 261 (YPERPIIFLSMCYNIYSIAYIVRLTV) form a helical membrane-spanning segment. Topologically, residues 262 to 285 (GRERISCDFEEAAEPVLIQEGLKN) are extracellular. A helical membrane pass occupies residues 286-319 (TGCAIIFLLMYFFGMASSIWWVILTLTWFLAAGL). The Cytoplasmic portion of the chain corresponds to 320–322 (KWG). The chain crosses the membrane as a helical span at residues 323 to 351 (HEAIEMHSSYFHIAAWAIPAVKTIVILIM). The Extracellular portion of the chain corresponds to 352–369 (RLVDADELTGLCYVGNQN). The chain crosses the membrane as a helical span at residues 370–396 (IDALTGFVVAPLFTYLVIGTLFIAAGL). At 397–417 (VALFKIRSNLQKDGTKTDKLE) the chain is on the cytoplasmic side. A helical transmembrane segment spans residues 418–443 (RLMVKIGVFSVLYTVPATCVIACYFY). Residues 444–459 (EVSNWNVFRYTADDSN) are Extracellular-facing. A helical transmembrane segment spans residues 460 to 481 (MAVEMLNIFMSLLVGITSGMWI). At 482–523 (WSAKTLHTWQKCTNRLVNSGKVKRKKRVDGWVKPGKGNETVV) the chain is on the cytoplasmic side. Residues 485 to 490 (KTLHTW) carry the Lys-Thr-X-X-X-Trp motif, mediates interaction with the PDZ domain of Dvl family members motif. Residues 521-523 (TVV) carry the PDZ-binding motif.

This sequence belongs to the G-protein coupled receptor Fz/Smo family. In terms of assembly, interacts (via FZ domain) with tsku; tsku competes with wnt2b for binding to fzd4, inhibiting Wnt signaling and repressing peripheral eye development.

It localises to the cell membrane. Its function is as follows. Receptor for Wnt proteins. Most frizzled receptors are coupled to the beta-catenin canonical signaling pathway, which leads to the activation of disheveled proteins, inhibition of GSK-3 kinase, nuclear accumulation of beta-catenin and activation of Wnt target genes. A second signaling pathway involving PKC and calcium fluxes has been seen for some family members, but it is not yet clear if it represents a distinct pathway or if it can be integrated in the canonical pathway, as PKC seems to be required for Wnt-mediated inactivation of GSK-3 kinase. Both pathways seem to involve interactions with G-proteins. May be involved in transduction and intercellular transmission of polarity information during tissue morphogenesis and/or in differentiated tissues. Activated by Wnt5A. The chain is Frizzled-4 (fzd4) from Xenopus laevis (African clawed frog).